The chain runs to 213 residues: MQPWLWLVFSMKLAALWSSSALIQTPSSLLVQTNHTAKMSCEVKSISKLTSIYWLRERQDPKDKYFEFLASWSSSKGVLYGESVDKKRNIILESSDSRRPFLSIMNVKPEDSDFYFCATVGSPKMVFGTGTKLTVVDVLPTTAPTKKTTLKMKKKKQCPFPHPETQKGLTCSLTTLSLLVVCILLLLAFLGVAVYFYCVRRRARIHFMKQFHK.

A signal peptide spans 1-21 (MQPWLWLVFSMKLAALWSSSA). Residues 22–133 (LIQTPSSLLV…KMVFGTGTKL (112 aa)) form the Ig-like V-type domain. Residues 22–175 (LIQTPSSLLV…QKGLTCSLTT (154 aa)) are Extracellular-facing. Residue asparagine 34 is glycosylated (N-linked (GlcNAc...) asparagine). A disulfide bond links cysteine 41 and cysteine 117. A helical transmembrane segment spans residues 176-196 (LSLLVVCILLLLAFLGVAVYF). The Cytoplasmic portion of the chain corresponds to 197 to 213 (YCVRRRARIHFMKQFHK).

Forms disulfide-linked heterodimers with CD8A at the cell surface. Interacts with CD3D; this interaction couples TCR-CD3 with CD8. Interacts with LCK. Post-translationally, palmitoylated at the cytoplasmic tail and thereby targets the heterodimer CD8A/CD8B to lipid rafts unlike CD8A homodimers.

Its subcellular location is the membrane. In terms of biological role, integral membrane glycoprotein that plays an essential role in the immune response and serves multiple functions in responses against both external and internal offenses. In T-cells, functions primarily as a coreceptor for MHC class I molecule:peptide complex. The antigens presented by class I peptides are derived from cytosolic proteins while class II derived from extracellular proteins. Interacts simultaneously with the T-cell receptor (TCR) and the MHC class I proteins presented by antigen presenting cells (APCs). In turn, recruits the Src kinase LCK to the vicinity of the TCR-CD3 complex. A palmitoylation site in the cytoplasmic tail of CD8B chain contributes to partitioning of CD8 into the plasma membrane lipid rafts where signaling proteins are enriched. Once LCK recruited, it initiates different intracellular signaling pathways by phosphorylating various substrates ultimately leading to lymphokine production, motility, adhesion and activation of cytotoxic T-lymphocytes (CTLs). Additionally, plays a critical role in thymic selection of CD8+ T-cells. This is T-cell surface glycoprotein CD8 beta chain (Cd8b) from Mus musculus (Mouse).